The sequence spans 61 residues: Small ribosomal subunit protein uS14 (61 aa).

Positions 24, 27, 40, and 43 each coordinate Zn(2+).

The protein belongs to the universal ribosomal protein uS14 family. Zinc-binding uS14 subfamily. In terms of assembly, part of the 30S ribosomal subunit. Contacts proteins S3 and S10. Zn(2+) is required as a cofactor.

Functionally, binds 16S rRNA, required for the assembly of 30S particles and may also be responsible for determining the conformation of the 16S rRNA at the A site. This is Small ribosomal subunit protein uS14 from Rubrobacter xylanophilus (strain DSM 9941 / JCM 11954 / NBRC 16129 / PRD-1).